The chain runs to 135 residues: UPF0251 protein Hore_18270 (135 aa).

This sequence belongs to the UPF0251 family.

The sequence is that of UPF0251 protein Hore_18270 from Halothermothrix orenii (strain H 168 / OCM 544 / DSM 9562).